A 419-amino-acid chain; its full sequence is tRNA modification GTPase MnmE (419 aa).

Arg-2, Glu-59, and Arg-99 together coordinate (6S)-5-formyl-5,6,7,8-tetrahydrofolate. One can recognise a TrmE-type G domain in the interval 197-343; sequence GLSVVIAGPP…LHTMIVEMAR (147 aa). K(+) is bound at residue Asn-207. GTP is bound by residues 207–212, 226–232, and 251–254; these read NAGKST, SPVAGTT, and DTAG. Ser-211 contacts Mg(2+). Ser-226, Val-228, and Thr-231 together coordinate K(+). Thr-232 is a Mg(2+) binding site. Lys-419 contacts (6S)-5-formyl-5,6,7,8-tetrahydrofolate.

This sequence belongs to the TRAFAC class TrmE-Era-EngA-EngB-Septin-like GTPase superfamily. TrmE GTPase family. As to quaternary structure, homodimer. Heterotetramer of two MnmE and two MnmG subunits. The cofactor is K(+).

Its subcellular location is the cytoplasm. In terms of biological role, exhibits a very high intrinsic GTPase hydrolysis rate. Involved in the addition of a carboxymethylaminomethyl (cmnm) group at the wobble position (U34) of certain tRNAs, forming tRNA-cmnm(5)s(2)U34. In Sphingopyxis alaskensis (strain DSM 13593 / LMG 18877 / RB2256) (Sphingomonas alaskensis), this protein is tRNA modification GTPase MnmE.